Reading from the N-terminus, the 392-residue chain is Phosphopentomutase (392 aa).

Mn(2+)-binding residues include D10, D282, H287, D323, H324, and H335.

The protein belongs to the phosphopentomutase family. Requires Mn(2+) as cofactor.

Its subcellular location is the cytoplasm. The catalysed reaction is 2-deoxy-alpha-D-ribose 1-phosphate = 2-deoxy-D-ribose 5-phosphate. It carries out the reaction alpha-D-ribose 1-phosphate = D-ribose 5-phosphate. It functions in the pathway carbohydrate degradation; 2-deoxy-D-ribose 1-phosphate degradation; D-glyceraldehyde 3-phosphate and acetaldehyde from 2-deoxy-alpha-D-ribose 1-phosphate: step 1/2. Its function is as follows. Isomerase that catalyzes the conversion of deoxy-ribose 1-phosphate (dRib-1-P) and ribose 1-phosphate (Rib-1-P) to deoxy-ribose 5-phosphate (dRib-5-P) and ribose 5-phosphate (Rib-5-P), respectively. The sequence is that of Phosphopentomutase from Dictyoglomus thermophilum (strain ATCC 35947 / DSM 3960 / H-6-12).